The following is a 274-amino-acid chain: Large ribosomal subunit protein uL2 (274 aa).

The interval 223 to 274 (VAMNPVDHPHGGGEGRTSGGRHPVSPWGMPTKGFKTRKNKSTDKYIVRRRNK) is disordered.

It belongs to the universal ribosomal protein uL2 family. In terms of assembly, part of the 50S ribosomal subunit. Forms a bridge to the 30S subunit in the 70S ribosome.

Functionally, one of the primary rRNA binding proteins. Required for association of the 30S and 50S subunits to form the 70S ribosome, for tRNA binding and peptide bond formation. It has been suggested to have peptidyltransferase activity; this is somewhat controversial. Makes several contacts with the 16S rRNA in the 70S ribosome. This is Large ribosomal subunit protein uL2 from Aliivibrio salmonicida (strain LFI1238) (Vibrio salmonicida (strain LFI1238)).